Reading from the N-terminus, the 344-residue chain is GTPase Obg (344 aa).

The region spanning 1 to 159 (MKFLDLAKVY…RTIWLRLKLI (159 aa)) is the Obg domain. The 167-residue stretch at 160–326 (ADVGLLGLPN…VLRVLRARVD (167 aa)) folds into the OBG-type G domain. Residues 166–173 (GLPNAGKS), 191–195 (FTTLV), 212–215 (DIPG), 279–282 (NKID), and 307–309 (SGV) contribute to the GTP site. Positions 173 and 193 each coordinate Mg(2+).

This sequence belongs to the TRAFAC class OBG-HflX-like GTPase superfamily. OBG GTPase family. In terms of assembly, monomer. Mg(2+) serves as cofactor.

It localises to the cytoplasm. Functionally, an essential GTPase which binds GTP, GDP and possibly (p)ppGpp with moderate affinity, with high nucleotide exchange rates and a fairly low GTP hydrolysis rate. Plays a role in control of the cell cycle, stress response, ribosome biogenesis and in those bacteria that undergo differentiation, in morphogenesis control. This Jannaschia sp. (strain CCS1) protein is GTPase Obg.